A 573-amino-acid chain; its full sequence is 3-(3-hydroxy-phenyl)propionate/3-hydroxycinnamic acid hydroxylase (573 aa).

FAD contacts are provided by residues 18–47 and 283–293; these read DVVI…IVEE and FRKGRMFLAGD.

This sequence belongs to the PheA/TfdB FAD monooxygenase family. The cofactor is FAD.

The catalysed reaction is 3-(3-hydroxyphenyl)propanoate + NADH + O2 + H(+) = 3-(2,3-dihydroxyphenyl)propanoate + NAD(+) + H2O. It carries out the reaction (2E)-3-(3-hydroxyphenyl)prop-2-enoate + NADH + O2 + H(+) = (2E)-3-(2,3-dihydroxyphenyl)prop-2-enoate + NAD(+) + H2O. It functions in the pathway aromatic compound metabolism; 3-phenylpropanoate degradation. Functionally, catalyzes the insertion of one atom of molecular oxygen into position 2 of the phenyl ring of 3-(3-hydroxyphenyl)propionate (3-HPP) and hydroxycinnamic acid (3HCI). In Mycobacterium sp. (strain KMS), this protein is 3-(3-hydroxy-phenyl)propionate/3-hydroxycinnamic acid hydroxylase.